The primary structure comprises 330 residues: Dipeptide transport ATP-binding protein DppD (330 aa).

The 249-residue stretch at 6–254 folds into the ABC transporter domain; sequence VKELSVHFGD…PKHPYTQALL (249 aa). 40-47 contributes to the ATP binding site; the sequence is GESGSGKS.

The protein belongs to the ABC transporter superfamily.

The protein resides in the cell inner membrane. The catalysed reaction is a dipeptide(out) + ATP + H2O = a dipeptide(in) + ADP + phosphate + H(+). In terms of biological role, part of the ABC transporter DppBCDF involved in dipeptide transport. Responsible for energy coupling to the transport system. The chain is Dipeptide transport ATP-binding protein DppD (dppD) from Haemophilus influenzae (strain ATCC 51907 / DSM 11121 / KW20 / Rd).